The sequence spans 247 residues: Segregation and condensation protein A (247 aa).

It belongs to the ScpA family. As to quaternary structure, component of a cohesin-like complex composed of ScpA, ScpB and the Smc homodimer, in which ScpA and ScpB bind to the head domain of Smc. The presence of the three proteins is required for the association of the complex with DNA.

It localises to the cytoplasm. Its function is as follows. Participates in chromosomal partition during cell division. May act via the formation of a condensin-like complex containing Smc and ScpB that pull DNA away from mid-cell into both cell halves. The protein is Segregation and condensation protein A of Bacillus cereus (strain 03BB102).